We begin with the raw amino-acid sequence, 33 residues long: Photosystem II reaction center protein Psb30 (33 aa).

A helical transmembrane segment spans residues 5–25 (VIAQLTVLSLIVLSGPLVIIL).

This sequence belongs to the Psb30/Ycf12 family. In terms of assembly, PSII is composed of 1 copy each of membrane proteins PsbA, PsbB, PsbC, PsbD, PsbE, PsbF, PsbH, PsbI, PsbJ, PsbK, PsbL, PsbM, PsbT, PsbX, PsbY, PsbZ, Psb30/Ycf12, peripheral proteins of the oxygen-evolving complex and a large number of cofactors. It forms dimeric complexes.

The protein localises to the plastid. The protein resides in the chloroplast thylakoid membrane. In terms of biological role, a core subunit of photosystem II (PSII), probably helps stabilize the reaction center. The protein is Photosystem II reaction center protein Psb30 of Chlorokybus atmophyticus (Soil alga).